Reading from the N-terminus, the 335-residue chain is NADH-quinone oxidoreductase subunit H (335 aa).

8 consecutive transmembrane segments (helical) span residues 15-35, 81-101, 114-134, 154-174, 187-207, 238-258, 270-290, and 307-327; these read VVKAIVVLLAVVVCGALLSFV, MIFTLAPVVAMSALLIGFSII, IGLLFFFAMAGLSVYAVLFAG, VSYEVFLGLALMGVVVQVGSF, LWFIIPQFFGFCTFFIAGVAV, FFVGEYIGIILISALLVTLFF, QVPFLWFALKTAFFIMLFILL, and WKFCLPLTLINLLVTAAIVLY.

It belongs to the complex I subunit 1 family. NDH-1 is composed of 13 different subunits. Subunits NuoA, H, J, K, L, M, N constitute the membrane sector of the complex.

The protein resides in the cell inner membrane. The catalysed reaction is a quinone + NADH + 5 H(+)(in) = a quinol + NAD(+) + 4 H(+)(out). Its function is as follows. NDH-1 shuttles electrons from NADH, via FMN and iron-sulfur (Fe-S) centers, to quinones in the respiratory chain. The immediate electron acceptor for the enzyme in this species is believed to be ubiquinone. Couples the redox reaction to proton translocation (for every two electrons transferred, four hydrogen ions are translocated across the cytoplasmic membrane), and thus conserves the redox energy in a proton gradient. This subunit may bind ubiquinone. The sequence is that of NADH-quinone oxidoreductase subunit H from Pseudomonas putida (strain GB-1).